Here is a 578-residue protein sequence, read N- to C-terminus: Arginine--tRNA ligase (578 aa).

The 'HIGH' region motif lies at 122–132 (PNVAKEMHVGH).

The protein belongs to the class-I aminoacyl-tRNA synthetase family. Monomer.

The protein resides in the cytoplasm. It catalyses the reaction tRNA(Arg) + L-arginine + ATP = L-arginyl-tRNA(Arg) + AMP + diphosphate. This chain is Arginine--tRNA ligase, found in Shigella sonnei (strain Ss046).